A 120-amino-acid polypeptide reads, in one-letter code: NAD(P)H-quinone oxidoreductase subunit 3 (120 aa).

3 helical membrane passes run 10-30 (FLGF…TNLI), 64-84 (MFAL…PWAV), and 89-109 (LGLL…IALA).

Belongs to the complex I subunit 3 family. In terms of assembly, NDH-1 can be composed of about 15 different subunits; different subcomplexes with different compositions have been identified which probably have different functions.

The protein resides in the cellular thylakoid membrane. The catalysed reaction is a plastoquinone + NADH + (n+1) H(+)(in) = a plastoquinol + NAD(+) + n H(+)(out). It catalyses the reaction a plastoquinone + NADPH + (n+1) H(+)(in) = a plastoquinol + NADP(+) + n H(+)(out). Its function is as follows. NDH-1 shuttles electrons from an unknown electron donor, via FMN and iron-sulfur (Fe-S) centers, to quinones in the respiratory and/or the photosynthetic chain. The immediate electron acceptor for the enzyme in this species is believed to be plastoquinone. Couples the redox reaction to proton translocation, and thus conserves the redox energy in a proton gradient. Cyanobacterial NDH-1 also plays a role in inorganic carbon-concentration. This Prochlorococcus marinus (strain AS9601) protein is NAD(P)H-quinone oxidoreductase subunit 3.